Here is an 874-residue protein sequence, read N- to C-terminus: Alanine--tRNA ligase (874 aa).

Residues histidine 562, histidine 566, cysteine 664, and histidine 668 each contribute to the Zn(2+) site.

It belongs to the class-II aminoacyl-tRNA synthetase family. It depends on Zn(2+) as a cofactor.

It is found in the cytoplasm. It carries out the reaction tRNA(Ala) + L-alanine + ATP = L-alanyl-tRNA(Ala) + AMP + diphosphate. Its function is as follows. Catalyzes the attachment of alanine to tRNA(Ala) in a two-step reaction: alanine is first activated by ATP to form Ala-AMP and then transferred to the acceptor end of tRNA(Ala). Also edits incorrectly charged Ser-tRNA(Ala) and Gly-tRNA(Ala) via its editing domain. The polypeptide is Alanine--tRNA ligase (Shewanella loihica (strain ATCC BAA-1088 / PV-4)).